The chain runs to 268 residues: Tryptophan synthase alpha chain (268 aa).

Residues E49 and D60 each act as proton acceptor in the active site.

Belongs to the TrpA family. As to quaternary structure, tetramer of two alpha and two beta chains.

The catalysed reaction is (1S,2R)-1-C-(indol-3-yl)glycerol 3-phosphate + L-serine = D-glyceraldehyde 3-phosphate + L-tryptophan + H2O. It participates in amino-acid biosynthesis; L-tryptophan biosynthesis; L-tryptophan from chorismate: step 5/5. Its function is as follows. The alpha subunit is responsible for the aldol cleavage of indoleglycerol phosphate to indole and glyceraldehyde 3-phosphate. This Escherichia coli O1:K1 / APEC protein is Tryptophan synthase alpha chain.